A 214-amino-acid chain; its full sequence is Riboflavin kinase (214 aa).

A disordered region spans residues 1 to 26; sequence MRPDGPRDPVAGPDSGPEPPYPVRLS. Mg(2+) is bound by residues threonine 44 and asparagine 46. The active-site Nucleophile is glutamate 116.

It belongs to the flavokinase family. It depends on Zn(2+) as a cofactor. Mg(2+) is required as a cofactor.

It catalyses the reaction riboflavin + ATP = FMN + ADP + H(+). The protein operates within cofactor biosynthesis; FMN biosynthesis; FMN from riboflavin (ATP route): step 1/1. Functionally, catalyzes the phosphorylation of riboflavin (vitamin B2) to form flavin mononucleotide (FMN) coenzyme. This chain is Riboflavin kinase (fmn1), found in Aspergillus fumigatus (strain ATCC MYA-4609 / CBS 101355 / FGSC A1100 / Af293) (Neosartorya fumigata).